A 397-amino-acid chain; its full sequence is 1-deoxy-D-xylulose 5-phosphate reductoisomerase (397 aa).

NADPH is bound by residues T10, G11, S12, I13, Q38, and N123. A 1-deoxy-D-xylulose 5-phosphate-binding site is contributed by K124. Residue E125 participates in NADPH binding. D149 is a Mn(2+) binding site. 1-deoxy-D-xylulose 5-phosphate is bound by residues S150, E151, S185, and H208. Residue E151 coordinates Mn(2+). G214 contacts NADPH. 1-deoxy-D-xylulose 5-phosphate-binding residues include S221, N226, K227, and E230. E230 is a Mn(2+) binding site.

This sequence belongs to the DXR family. The cofactor is Mg(2+). It depends on Mn(2+) as a cofactor.

It carries out the reaction 2-C-methyl-D-erythritol 4-phosphate + NADP(+) = 1-deoxy-D-xylulose 5-phosphate + NADPH + H(+). Its pathway is isoprenoid biosynthesis; isopentenyl diphosphate biosynthesis via DXP pathway; isopentenyl diphosphate from 1-deoxy-D-xylulose 5-phosphate: step 1/6. Functionally, catalyzes the NADPH-dependent rearrangement and reduction of 1-deoxy-D-xylulose-5-phosphate (DXP) to 2-C-methyl-D-erythritol 4-phosphate (MEP). This is 1-deoxy-D-xylulose 5-phosphate reductoisomerase from Idiomarina loihiensis (strain ATCC BAA-735 / DSM 15497 / L2-TR).